A 426-amino-acid chain; its full sequence is MIKVDLQHSGLSIADLNEAKVKKVHEMIINKSGKGNDFLGWIEWPKTFDKKEYEEMKKVASSLRNKIDVLVTVGIGGSYLGIRAADEMIRGINHSDKVQVIYAGHTMSSTYVAQLSEYLKGKKFGICVISKSGTTTEPGIAFRALEKQLIEQVGVEASKELIVAVTDSSKGALKTLADNKGYPTFVIPDDIGGRFSVLTPVGIFPLLVAGVNTDNIFAGAIKAMDELVQGDLTNEAYKYAAARNALYNAGYKAEALVAYELQMQYTAEWWKQLFGESEGKDNKGLYPTSMIFSTDLHSLGQWVQEGARNVLFETVIKVKEPVANMLVEADTDNYDGLNYLSGKSFHEINSTAIEGVIDAHVNTGKMPNIVLEFDKMNDVQFGYLVYFFEIAVAMSGYLLEVNPFDQPGVEVYKYNMFKLLGKPGVK.

Catalysis depends on Glu-276, which acts as the Proton donor. Residues His-297 and Lys-413 contribute to the active site.

The protein belongs to the GPI family.

Its subcellular location is the cytoplasm. The enzyme catalyses alpha-D-glucose 6-phosphate = beta-D-fructose 6-phosphate. It functions in the pathway carbohydrate biosynthesis; gluconeogenesis. The protein operates within carbohydrate degradation; glycolysis; D-glyceraldehyde 3-phosphate and glycerone phosphate from D-glucose: step 2/4. In terms of biological role, catalyzes the reversible isomerization of glucose-6-phosphate to fructose-6-phosphate. The chain is Glucose-6-phosphate isomerase from Mesoplasma florum (strain ATCC 33453 / NBRC 100688 / NCTC 11704 / L1) (Acholeplasma florum).